The primary structure comprises 219 residues: OVARIAN TUMOR DOMAIN-containing deubiquitinating enzyme 12 (219 aa).

The OTU domain maps to 79 to 203 (LCELKVSGDG…EVHYNSLYDI (125 aa)). The active site involves Asp87. The active-site Nucleophile is Cys90. Residue His196 is part of the active site.

This sequence belongs to the peptidase C85 family.

It carries out the reaction Thiol-dependent hydrolysis of ester, thioester, amide, peptide and isopeptide bonds formed by the C-terminal Gly of ubiquitin (a 76-residue protein attached to proteins as an intracellular targeting signal).. In terms of biological role, hydrolase that can remove conjugated ubiquitin from proteins in vitro and may therefore play an important regulatory role at the level of protein turnover by preventing degradation. Inactive cysteine protease. The chain is OVARIAN TUMOR DOMAIN-containing deubiquitinating enzyme 12 from Arabidopsis thaliana (Mouse-ear cress).